The primary structure comprises 121 residues: Large ribosomal subunit protein uL14c (121 aa).

Component of the chloroplast large ribosomal subunit (LSU). Mature 70S chloroplast ribosomes of higher plants consist of a small (30S) and a large (50S) subunit. The 30S small subunit contains 1 molecule of ribosomal RNA (16S rRNA) and 24 different proteins. The 50S large subunit contains 3 rRNA molecules (23S, 5S and 4.5S rRNA) and 33 different proteins.

The protein localises to the plastid. The protein resides in the chloroplast. In terms of biological role, component of the chloroplast ribosome (chloro-ribosome), a dedicated translation machinery responsible for the synthesis of chloroplast genome-encoded proteins, including proteins of the transcription and translation machinery and components of the photosynthetic apparatus. This chain is Large ribosomal subunit protein uL14c, found in Spinacia oleracea (Spinach).